A 224-amino-acid chain; its full sequence is 2-C-methyl-D-erythritol 4-phosphate cytidylyltransferase (224 aa).

The protein belongs to the IspD/TarI cytidylyltransferase family. IspD subfamily.

It catalyses the reaction 2-C-methyl-D-erythritol 4-phosphate + CTP + H(+) = 4-CDP-2-C-methyl-D-erythritol + diphosphate. The protein operates within isoprenoid biosynthesis; isopentenyl diphosphate biosynthesis via DXP pathway; isopentenyl diphosphate from 1-deoxy-D-xylulose 5-phosphate: step 2/6. In terms of biological role, catalyzes the formation of 4-diphosphocytidyl-2-C-methyl-D-erythritol from CTP and 2-C-methyl-D-erythritol 4-phosphate (MEP). The polypeptide is 2-C-methyl-D-erythritol 4-phosphate cytidylyltransferase (Saccharopolyspora erythraea (strain ATCC 11635 / DSM 40517 / JCM 4748 / NBRC 13426 / NCIMB 8594 / NRRL 2338)).